We begin with the raw amino-acid sequence, 354 residues long: 3-dehydroquinate synthase (354 aa).

Residues 100–104, 124–125, Lys-136, Lys-145, and 163–166 each bind NAD(+); these read GATGD, TT, and FLAT. 3 residues coordinate Zn(2+): Glu-178, His-242, and His-256.

This sequence belongs to the sugar phosphate cyclases superfamily. Dehydroquinate synthase family. Requires Co(2+) as cofactor. It depends on Zn(2+) as a cofactor. NAD(+) is required as a cofactor.

It localises to the cytoplasm. It catalyses the reaction 7-phospho-2-dehydro-3-deoxy-D-arabino-heptonate = 3-dehydroquinate + phosphate. Its pathway is metabolic intermediate biosynthesis; chorismate biosynthesis; chorismate from D-erythrose 4-phosphate and phosphoenolpyruvate: step 2/7. Its function is as follows. Catalyzes the conversion of 3-deoxy-D-arabino-heptulosonate 7-phosphate (DAHP) to dehydroquinate (DHQ). In Staphylococcus haemolyticus (strain JCSC1435), this protein is 3-dehydroquinate synthase.